We begin with the raw amino-acid sequence, 490 residues long: Cruciferin BnC1 (490 aa).

An N-terminal signal peptide occupies residues 1-23 (MARLSSLLSFSLALLIFLHGSTA). Cystine bridges form between C30–C63 and C106–C307. Cupin type-1 domains follow at residues 35 to 263 (LNAL…RTAQ) and 313 to 462 (DNLD…EEAR). T109 carries the post-translational modification Phosphothreonine. The tract at residues 113–164 (SSVFQPSGGSPSGEGQGQGQQGQGQGHQGQGQGQQGQQGQQGQQSQGQGFRD) is disordered. The span at 122–148 (SPSGEGQGQGQQGQGQGHQGQGQGQQG) shows a compositional bias: gly residues. Low complexity predominate over residues 149–161 (QQGQQGQQSQGQG). Phosphotyrosine is present on Y330. Position 332 is a phosphoserine (S332). T426 carries the phosphothreonine modification.

This sequence belongs to the 11S seed storage protein (globulins) family. As to quaternary structure, hexamer; each subunit is composed of an acidic and a basic chain derived from a single precursor and linked by a disulfide bond.

Its function is as follows. This is a seed storage protein. In Brassica napus (Rape), this protein is Cruciferin BnC1 (BnC1).